Reading from the N-terminus, the 284-residue chain is tRNA pseudouridine synthase A (284 aa).

The active-site Nucleophile is the D62. Y120 is a binding site for substrate.

Belongs to the tRNA pseudouridine synthase TruA family. In terms of assembly, homodimer.

The enzyme catalyses uridine(38/39/40) in tRNA = pseudouridine(38/39/40) in tRNA. Its function is as follows. Formation of pseudouridine at positions 38, 39 and 40 in the anticodon stem and loop of transfer RNAs. This is tRNA pseudouridine synthase A from Thermosynechococcus vestitus (strain NIES-2133 / IAM M-273 / BP-1).